Reading from the N-terminus, the 845-residue chain is Protein P (845 aa).

Positions 1 to 179 are terminal protein domain (TP); sequence MPLSYQHFLK…FCGSPYSWEQ (179 aa). The interval 180-348 is spacer; sequence ELHHGRLVTK…YCLSHLVNLL (169 aa). Disordered regions lie at residues 188-211 and 288-317; these read TKTSQRHGDKSVCSQPSGILSRSS and YSHLSTSKRQSSSGHKVEFPSFPPSSARSQ. Polar residues-rich tracts occupy residues 199 to 211 and 290 to 301; these read VCSQPSGILSRSS and HLSTSKRQSSSG. The interval 349 to 692 is polymerase/reverse transcriptase domain (RT); that stretch reads EDWGPCTDHG…YMNLYPVARQ (344 aa). The 244-residue stretch at 359–602 folds into the Reverse transcriptase domain; that stretch reads EHHIRIPRTP…YSLNFMGYII (244 aa). Residues aspartate 431, aspartate 553, and aspartate 554 each coordinate Mg(2+).

This sequence belongs to the hepadnaviridae P protein family.

It carries out the reaction DNA(n) + a 2'-deoxyribonucleoside 5'-triphosphate = DNA(n+1) + diphosphate. The enzyme catalyses Endonucleolytic cleavage to 5'-phosphomonoester.. With respect to regulation, activated by host HSP70 and HSP40 in vitro to be able to bind the epsilon loop of the pgRNA. Because deletion of the RNase H region renders the protein partly chaperone-independent, the chaperones may be needed indirectly to relieve occlusion of the RNA-binding site by this domain. Inhibited by several reverse-transcriptase inhibitors: Lamivudine, Adefovir and Entecavir. Multifunctional enzyme that converts the viral RNA genome into dsDNA in viral cytoplasmic capsids. This enzyme displays a DNA polymerase activity that can copy either DNA or RNA templates, and a ribonuclease H (RNase H) activity that cleaves the RNA strand of RNA-DNA heteroduplexes in a partially processive 3'- to 5'-endonucleasic mode. Neo-synthesized pregenomic RNA (pgRNA) are encapsidated together with the P protein, and reverse-transcribed inside the nucleocapsid. Initiation of reverse-transcription occurs first by binding the epsilon loop on the pgRNA genome, and is initiated by protein priming, thereby the 5'-end of (-)DNA is covalently linked to P protein. Partial (+)DNA is synthesized from the (-)DNA template and generates the relaxed circular DNA (RC-DNA) genome. After budding and infection, the RC-DNA migrates in the nucleus, and is converted into a plasmid-like covalently closed circular DNA (cccDNA). The activity of P protein does not seem to be necessary for cccDNA generation, and is presumably released from (+)DNA by host nuclear DNA repair machinery. In Homo sapiens (Human), this protein is Protein P.